Reading from the N-terminus, the 809-residue chain is WD repeat protein iqw1 (809 aa).

WD repeat units follow at residues 43–82 (GHTGCVNTLDWSADGEFLLSGSDDTRLIVWDVFNEYKPRH), 87–128 (GHVQ…EGGM), 141–180 (CALDSVKNIVPCDNGHTFLVCSEDGTARQYDIREPHVCNQ), 193–233 (PYRI…KSFR), and 241–295 (SPEK…LFHV). The disordered stretch occupies residues 599 to 644 (SMYTGHSDLNDDDDDYQDEESYSYASDDDDESDEDSDEGPTLLSLR). Positions 608 to 636 (NDDDDDYQDEESYSYASDDDDESDEDSDE) are enriched in acidic residues. WD repeat units lie at residues 668 to 708 (CNVE…ILAI) and 711 to 750 (GDSEAVNVIEGHPRCPTLAVSGIDSTVKIFNTENTPPSGC).

Interacts with ddb1.

It is found in the cytoplasm. Its function is as follows. Ligand-dependent coactivator of nuclear receptors that may function as a substrate receptor for CUL4-DDB1 E3 ubiquitin-protein ligase complex. The polypeptide is WD repeat protein iqw1 (iqw1) (Schizosaccharomyces pombe (strain 972 / ATCC 24843) (Fission yeast)).